The chain runs to 126 residues: Glycine cleavage system H protein (126 aa).

One can recognise a Lipoyl-binding domain in the interval 23-104 (TLTVGITDHA…PYESWLFKIK (82 aa)). N6-lipoyllysine is present on K64.

This sequence belongs to the GcvH family. As to quaternary structure, the glycine cleavage system is composed of four proteins: P, T, L and H. Requires (R)-lipoate as cofactor.

The glycine cleavage system catalyzes the degradation of glycine. The H protein shuttles the methylamine group of glycine from the P protein to the T protein. This chain is Glycine cleavage system H protein, found in Paraburkholderia phytofirmans (strain DSM 17436 / LMG 22146 / PsJN) (Burkholderia phytofirmans).